We begin with the raw amino-acid sequence, 219 residues long: Tegument protein UL14 (219 aa).

Positions 159 to 219 (VHTDAPSRPG…GFARDCPDGE (61 aa)) are disordered. Residues 186 to 202 (APPPETAPSPEPAPGPA) show a composition bias toward pro residues.

It belongs to the alphaherpesvirinae HHV-1 UL14 protein family. Phosphorylated.

Its subcellular location is the virion tegument. It is found in the host cytoplasm. The protein resides in the host nucleus. Functionally, contributes to the nuclear transport of the viral transcriptional activator VP16 during the early phase of infection. Therefore, participates indirectly in the regulation of the immediate-early gene expression. Additionally, seems to be important for efficient nuclear targeting of capsids. The polypeptide is Tegument protein UL14 (Human herpesvirus 2 (strain HG52) (HHV-2)).